Reading from the N-terminus, the 498-residue chain is Ribulose bisphosphate carboxylase large chain (498 aa).

Positions 1 to 2 (MS) are excised as a propeptide. Pro-3 carries the post-translational modification N-acetylproline. Lys-14 bears the N6,N6,N6-trimethyllysine mark. Asn-123 and Thr-173 together coordinate substrate. The active-site Proton acceptor is the Lys-175. Lys-177 contacts substrate. 3 residues coordinate Mg(2+): Lys-201, Asp-203, and Glu-204. Position 201 is an N6-carboxylysine (Lys-201). His-294 functions as the Proton acceptor in the catalytic mechanism. Substrate-binding residues include Arg-295, His-327, and Ser-379. The segment at 473–498 (DTLDPNDKKQRDNEDTLADKFFGDKG) is disordered.

The protein belongs to the RuBisCO large chain family. Type I subfamily. In terms of assembly, heterohexadecamer of 8 large chains and 8 small chains; disulfide-linked. The disulfide link is formed within the large subunit homodimers. It depends on Mg(2+) as a cofactor. The disulfide bond which can form in the large chain dimeric partners within the hexadecamer appears to be associated with oxidative stress and protein turnover.

The protein localises to the plastid. It carries out the reaction 2 (2R)-3-phosphoglycerate + 2 H(+) = D-ribulose 1,5-bisphosphate + CO2 + H2O. It catalyses the reaction D-ribulose 1,5-bisphosphate + O2 = 2-phosphoglycolate + (2R)-3-phosphoglycerate + 2 H(+). Its function is as follows. RuBisCO catalyzes two reactions: the carboxylation of D-ribulose 1,5-bisphosphate, the primary event in carbon dioxide fixation, as well as the oxidative fragmentation of the pentose substrate in the photorespiration process. Both reactions occur simultaneously and in competition at the same active site. The protein is Ribulose bisphosphate carboxylase large chain of Cuscuta exaltata (Tall dodder).